Consider the following 426-residue polypeptide: Glutamate-1-semialdehyde 2,1-aminomutase (426 aa).

The residue at position 265 (Lys-265) is an N6-(pyridoxal phosphate)lysine.

This sequence belongs to the class-III pyridoxal-phosphate-dependent aminotransferase family. HemL subfamily. Homodimer. Requires pyridoxal 5'-phosphate as cofactor.

The protein localises to the cytoplasm. The enzyme catalyses (S)-4-amino-5-oxopentanoate = 5-aminolevulinate. The protein operates within porphyrin-containing compound metabolism; protoporphyrin-IX biosynthesis; 5-aminolevulinate from L-glutamyl-tRNA(Glu): step 2/2. The protein is Glutamate-1-semialdehyde 2,1-aminomutase of Pectobacterium atrosepticum (strain SCRI 1043 / ATCC BAA-672) (Erwinia carotovora subsp. atroseptica).